The sequence spans 152 residues: Cytochrome c-type biogenesis CcmH-like mitochondrial protein (152 aa).

Over 1–83 the chain is Mitochondrial intermembrane; sequence MATEEDVKQR…ILYTPKFDLQ (83 aa). Heme is bound by residues C26 and C29. Residues 84–104 traverse the membrane as a helical segment; that stretch reads TAAIWLSPVIVGGVAAGVWAY. At 105-152 the chain is on the mitochondrial matrix side; it reads KKHRQRTNVHIMALNLVRGVPLTPREKETMLDVLTPPPPANKWWWPGK.

This sequence belongs to the CcmH/CycL/Ccl2/NrfF family.

It is found in the mitochondrion inner membrane. Functionally, plays a role in mitochondrial cytochrome c maturation. Probable component of a heme lyase complex involved in the reduction of apocytochrome c. In Oryza sativa subsp. indica (Rice), this protein is Cytochrome c-type biogenesis CcmH-like mitochondrial protein.